Here is a 497-residue protein sequence, read N- to C-terminus: Guanosine-5'-triphosphate,3'-diphosphate pyrophosphatase (497 aa).

Belongs to the GppA/Ppx family. GppA subfamily.

The enzyme catalyses guanosine 3'-diphosphate 5'-triphosphate + H2O = guanosine 3',5'-bis(diphosphate) + phosphate + H(+). The protein operates within purine metabolism; ppGpp biosynthesis; ppGpp from GTP: step 2/2. Functionally, catalyzes the conversion of pppGpp to ppGpp. Guanosine pentaphosphate (pppGpp) is a cytoplasmic signaling molecule which together with ppGpp controls the 'stringent response', an adaptive process that allows bacteria to respond to amino acid starvation, resulting in the coordinated regulation of numerous cellular activities. The protein is Guanosine-5'-triphosphate,3'-diphosphate pyrophosphatase of Vibrio cholerae serotype O1 (strain ATCC 39541 / Classical Ogawa 395 / O395).